Reading from the N-terminus, the 390-residue chain is Matrix metalloproteinase-23 (390 aa).

The Cytoplasmic segment spans residues 1–19 (MGRGARVPSEAPGAGVERR). Residues 1 to 78 (MGRGARVPSE…PGPLAPRRRR (78 aa)) constitute a propeptide that is removed on maturation. Residues 20–40 (WLGAALVALCLLPALVLLARL) form a helical; Signal-anchor for type II membrane protein membrane-spanning segment. Topologically, residues 41-390 (GAPAVPAWSA…TYSWRVRVRG (350 aa)) are lumenal. N-linked (GlcNAc...) asparagine glycans are attached at residues Asn92 and Asn148. A Zn(2+)-binding site is contributed by His211. Glu212 is a catalytic residue. Positions 215 and 221 each coordinate Zn(2+). Residue Asn232 is glycosylated (N-linked (GlcNAc...) asparagine). Residues 255-289 (CLDRLFVCASWARRGFCDARRRLMKRLCPSSCDFC) form the ShKT domain. 3 cysteine pairs are disulfide-bonded: Cys255/Cys289, Cys262/Cys282, and Cys271/Cys286. Residues 295 to 380 (PTVATTPPPP…VVRRQQRVLT (86 aa)) enclose the Ig-like C2-type domain. N-linked (GlcNAc...) asparagine glycosylation occurs at Asn316. Cysteines 321 and 370 form a disulfide.

The protein belongs to the peptidase M10A family. It depends on Zn(2+) as a cofactor. Post-translationally, N-glycosylated. Proteolytic cleavage might yield an active form. In terms of tissue distribution, predominantly expressed in ovary, testis and prostate.

Its subcellular location is the endoplasmic reticulum membrane. The protein resides in the membrane. Its activity is regulated as follows. Inhibited by TIMP2. Protease. May regulate the surface expression of some potassium channels by retaining them in the endoplasmic reticulum. The chain is Matrix metalloproteinase-23 (MMP23B) from Homo sapiens (Human).